Reading from the N-terminus, the 229-residue chain is MDSKGSSQKGSRLLLLLVVSNLLLCQGVVSTPVCPNGPGNCQVSLRDLFDRAVMVSHYIHDLSSEMFNEFDKRYAQGKGFITMALNSCHTSSLPTPEDKEQAQQTHHEVLMSLILGLLRSWNDPLYHLVTEVRGMKGAPDAILSRAIEIEEENKRLLEGMEMIFGQVIPGAKETEPYPVWSGLPSLQTKDEDARYSAFYNLLHCLRRDSSKIDTYLKLLNCRIIYNNNC.

Positions methionine 1–serine 30 are cleaved as a signal peptide. Cysteine 34 and cysteine 41 are joined by a disulfide. Phosphoserine is present on residues serine 56, serine 64, and serine 120. 2 cysteine pairs are disulfide-bonded: cysteine 88/cysteine 204 and cysteine 221/cysteine 229.

Belongs to the somatotropin/prolactin family. In terms of assembly, interacts with PRLR.

It is found in the secreted. Its function is as follows. Prolactin acts primarily on the mammary gland by promoting lactation. The polypeptide is Prolactin (PRL) (Bos taurus (Bovine)).